Consider the following 348-residue polypeptide: MIDIDGSYGEGGGQVLRTSLSLAAITGEPIRIAGIRAGRRKPGLAAQHLTAVRAAARICHGELQGDALGSTMLEFIPGGGVKAGNYIFDVSEVQQGGSAGAITLVLQTILLPLALADGDSHITLRGGTHVIFSPTVTYIERVYLPMLCRMGIKAQVKLGAWGWYPRGGGEVNLQVKGGCQLCGLNLLERGELKRVQGLAVATELPAHIPQRMANRAENLLRTAGLRVSMQALREKGVAPGAGIFLTAEYCNSLTGFGGFGRLRLSSEKVAEIACGQLLQFHETGAPVDEHLADQLLLPAALASESSQYRVAEVSTHLTTNAAVIEKFGLGKITVNQAERVVAIASDKT.

Residues Gln-107 and 290-294 (HLADQ) each bind ATP. His-316 acts as the Tele-AMP-histidine intermediate in catalysis.

The protein belongs to the RNA 3'-terminal cyclase family. Type 1 subfamily.

Its subcellular location is the cytoplasm. It carries out the reaction a 3'-end 3'-phospho-ribonucleotide-RNA + ATP = a 3'-end 2',3'-cyclophospho-ribonucleotide-RNA + AMP + diphosphate. Functionally, catalyzes the conversion of 3'-phosphate to a 2',3'-cyclic phosphodiester at the end of RNA. The mechanism of action of the enzyme occurs in 3 steps: (A) adenylation of the enzyme by ATP; (B) transfer of adenylate to an RNA-N3'P to produce RNA-N3'PP5'A; (C) and attack of the adjacent 2'-hydroxyl on the 3'-phosphorus in the diester linkage to produce the cyclic end product. The biological role of this enzyme is unknown but it is likely to function in some aspects of cellular RNA processing. The polypeptide is RNA 3'-terminal phosphate cyclase (Trichormus variabilis (strain ATCC 29413 / PCC 7937) (Anabaena variabilis)).